The chain runs to 124 residues: Ribonuclease pancreatic (124 aa).

Substrate contacts are provided by Lys7 and Arg10. Catalysis depends on His12, which acts as the Proton acceptor. Disulfide bonds link Cys26/Cys84, Cys40/Cys95, Cys58/Cys110, and Cys65/Cys72. Asn34 carries N-linked (GlcNAc...) asparagine glycosylation. Residues 41-45, Lys66, and Arg85 each bind substrate; that span reads KPVNT. His119 acts as the Proton donor in catalysis.

It belongs to the pancreatic ribonuclease family. In terms of assembly, monomer. Interacts with and forms tight 1:1 complexes with RNH1. Dimerization of two such complexes may occur. Interaction with RNH1 inhibits this protein. In terms of tissue distribution, pancreas.

Its subcellular location is the secreted. The catalysed reaction is an [RNA] containing cytidine + H2O = an [RNA]-3'-cytidine-3'-phosphate + a 5'-hydroxy-ribonucleotide-3'-[RNA].. It catalyses the reaction an [RNA] containing uridine + H2O = an [RNA]-3'-uridine-3'-phosphate + a 5'-hydroxy-ribonucleotide-3'-[RNA].. Functionally, endonuclease that catalyzes the cleavage of RNA on the 3' side of pyrimidine nucleotides. Acts on single-stranded and double-stranded RNA. The sequence is that of Ribonuclease pancreatic (RNASE1) from Mesocricetus auratus (Golden hamster).